We begin with the raw amino-acid sequence, 135 residues long: Small ribosomal subunit protein uS11 (135 aa).

Over residues 1–10 (MPPKSRTATA) the composition is skewed to polar residues. 2 disordered regions span residues 1–27 (MPPK…HGHA) and 114–135 (GAIQ…RRRV). Residues 12-27 (RKPRRKEKKNVAHGHA) are compositionally biased toward basic residues.

It belongs to the universal ribosomal protein uS11 family. In terms of assembly, part of the 30S ribosomal subunit. Interacts with proteins S7 and S18. Binds to IF-3.

Functionally, located on the platform of the 30S subunit, it bridges several disparate RNA helices of the 16S rRNA. Forms part of the Shine-Dalgarno cleft in the 70S ribosome. This Kineococcus radiotolerans (strain ATCC BAA-149 / DSM 14245 / SRS30216) protein is Small ribosomal subunit protein uS11.